A 165-amino-acid polypeptide reads, in one-letter code: Small ribosomal subunit protein uS5 (165 aa).

Residues 10-73 form the S5 DRBM domain; the sequence is LVEKLVAVDR…EAARRNMITV (64 aa).

It belongs to the universal ribosomal protein uS5 family. Part of the 30S ribosomal subunit. Contacts proteins S4 and S8.

Its function is as follows. With S4 and S12 plays an important role in translational accuracy. In terms of biological role, located at the back of the 30S subunit body where it stabilizes the conformation of the head with respect to the body. This Acinetobacter baylyi (strain ATCC 33305 / BD413 / ADP1) protein is Small ribosomal subunit protein uS5.